We begin with the raw amino-acid sequence, 310 residues long: Serine protease 30 (310 aa).

A signal peptide spans 1–21 (MESRARCIFLLLLQILTRARG). Positions 22–36 (DILPSVCGHSRDAGK) are cleaved as a propeptide — activation peptide. Residues 37–277 (IVGGQDALEG…YVDWIQRILA (241 aa)) enclose the Peptidase S1 domain. C63 and C79 are disulfide-bonded. Active-site charge relay system residues include H78 and D128. Disulfide bonds link C161/C235, C191/C214, and C225/C253. Residue S229 is the Charge relay system of the active site. Residues N238 and N279 are each glycosylated (N-linked (GlcNAc...) asparagine). S281 carries GPI-anchor amidated serine lipidation. The propeptide at 282 to 310 (DAYGYHSSASAAYQMLLPVLLAVALPGSL) is removed in mature form.

This sequence belongs to the peptidase S1 family. As to expression, expressed primarily in distal gut.

It is found in the cell membrane. With respect to regulation, inhibited by aprotinin, leupeptin, benzamidine and soybean trypsin inhibitor. Partially inhibited by PMSF and DFP. Functionally, selectively cleaves synthetic peptide substrates of trypsin. Activates the epithelial sodium channel ENaC. In Mus musculus (Mouse), this protein is Serine protease 30 (Prss30).